A 687-amino-acid chain; its full sequence is Ferric transport system permease protein FbpB (687 aa).

Transmembrane regions (helical) follow at residues 10–30, 50–70, 85–105, 106–126, 141–161, 192–212, 226–246, 271–291, 318–338, 347–367, 378–398, 425–445, 450–472, 484–504, 517–537, 538–558, 594–614, 620–640, and 649–669; these read LFESSHFWILLSLIAFIALPS, GWSSVNLTILWFLPLIGFWLL, LGLISFILLFAFISATIYKVS, MGYSVIVLIATLTALATFAFA, LLSIILLIFFFIVYPTVAIFI, LFLSGFVGIVSTVFGLAFALY, IFSILPIVTPPFVVGLGVTLM, GFNGIAIAQILAFAPISFMIL, YNIIFPLLRPALANSFLIVFI, PLVLGGSFDVIATQIYFYIAG, LGSMLLIFSLLIFIVQYMWIG, IIVMLGFWVVFNFALYGSIFY, VNWGVDYTLTLNNYAMLFGQGLS, IYAGIAAPLTALFGLLIAYIV, FLTMLCFAVPGTVAGVSYILA, FNDAPMYITGTGIIIIISMVM, IWFIVFPLLKPALLSALVTSF, TVSAIVFLVTADTRVATAYIL, and GVAIAYGSILIVVMMAIILFF. An ABC transmembrane type-1 1 domain is found at 188–393; sequence ISNSLFLSGF…IFSLLIFIVQ (206 aa). Positions 479 to 669 constitute an ABC transmembrane type-1 2 domain; sequence LINTMIYAGI…VVMMAIILFF (191 aa).

Belongs to the binding-protein-dependent transport system permease family. FbpB subfamily. As to quaternary structure, the complex is composed of two ATP-binding proteins (FbpC), two transmembrane proteins (FbpB) and a solute-binding protein (FbpA).

It localises to the cell inner membrane. Part of the ABC transporter complex FbpABC (TC 3.A.1.10.1) involved in Fe(3+) ions import. Probably responsible for the translocation of the substrate across the membrane. In Actinobacillus pleuropneumoniae (Haemophilus pleuropneumoniae), this protein is Ferric transport system permease protein FbpB (fbpB).